The primary structure comprises 197 residues: Peptide deformylase (197 aa).

2 residues coordinate Fe cation: cysteine 106 and histidine 148. The active site involves glutamate 149. Histidine 152 serves as a coordination point for Fe cation.

The protein belongs to the polypeptide deformylase family. Requires Fe(2+) as cofactor.

The catalysed reaction is N-terminal N-formyl-L-methionyl-[peptide] + H2O = N-terminal L-methionyl-[peptide] + formate. Its function is as follows. Removes the formyl group from the N-terminal Met of newly synthesized proteins. Requires at least a dipeptide for an efficient rate of reaction. N-terminal L-methionine is a prerequisite for activity but the enzyme has broad specificity at other positions. The protein is Peptide deformylase of Mycobacteroides abscessus (strain ATCC 19977 / DSM 44196 / CCUG 20993 / CIP 104536 / JCM 13569 / NCTC 13031 / TMC 1543 / L948) (Mycobacterium abscessus).